The sequence spans 741 residues: NAD(P)H-quinone oxidoreductase subunit 5, chloroplastic (741 aa).

Transmembrane regions (helical) follow at residues 9-29 (WIIP…LLLF), 40-60 (WAFQ…NLSI), 89-109 (IDPL…LVLI), 125-145 (FAYM…SNLI), 147-167 (IYIF…FWFT), 185-205 (GDFG…SFEF), 219-239 (NQVN…GAIA), 258-278 (TPIS…FLVA), 289-311 (HIMN…LALA), 327-347 (LGYM…FHLI), 354-374 (ALLF…VGYC), 396-416 (NSFL…CFWS), 425-445 (WLYS…TAFY), 549-569 (LFPI…GIPL), 605-625 (LFSV…YKPV), and 721-741 (YLFF…FLNL).

It belongs to the complex I subunit 5 family. In terms of assembly, NDH is composed of at least 16 different subunits, 5 of which are encoded in the nucleus.

The protein resides in the plastid. It localises to the chloroplast thylakoid membrane. The enzyme catalyses a plastoquinone + NADH + (n+1) H(+)(in) = a plastoquinol + NAD(+) + n H(+)(out). It catalyses the reaction a plastoquinone + NADPH + (n+1) H(+)(in) = a plastoquinol + NADP(+) + n H(+)(out). NDH shuttles electrons from NAD(P)H:plastoquinone, via FMN and iron-sulfur (Fe-S) centers, to quinones in the photosynthetic chain and possibly in a chloroplast respiratory chain. The immediate electron acceptor for the enzyme in this species is believed to be plastoquinone. Couples the redox reaction to proton translocation, and thus conserves the redox energy in a proton gradient. The polypeptide is NAD(P)H-quinone oxidoreductase subunit 5, chloroplastic (ndhF) (Symphyotrichum cordifolium (Heart-leaved aster)).